The chain runs to 87 residues: Cell division topological specificity factor (87 aa).

It belongs to the MinE family.

Its function is as follows. Prevents the cell division inhibition by proteins MinC and MinD at internal division sites while permitting inhibition at polar sites. This ensures cell division at the proper site by restricting the formation of a division septum at the midpoint of the long axis of the cell. The chain is Cell division topological specificity factor from Neisseria meningitidis serogroup C (strain 053442).